A 43-amino-acid polypeptide reads, in one-letter code: Protein PsbN (43 aa).

A helical transmembrane segment spans residues 7–27 (LSISIGVMVVAITGFSIYTAF).

Belongs to the PsbN family.

The protein localises to the cellular thylakoid membrane. May play a role in photosystem I and II biogenesis. The polypeptide is Protein PsbN (Trichodesmium erythraeum (strain IMS101)).